Reading from the N-terminus, the 325-residue chain is Tagatose 1,6-diphosphate aldolase 1 (325 aa).

The protein belongs to the aldolase LacD family.

The enzyme catalyses D-tagatofuranose 1,6-bisphosphate = D-glyceraldehyde 3-phosphate + dihydroxyacetone phosphate. It functions in the pathway carbohydrate metabolism; D-tagatose 6-phosphate degradation; D-glyceraldehyde 3-phosphate and glycerone phosphate from D-tagatose 6-phosphate: step 2/2. This chain is Tagatose 1,6-diphosphate aldolase 1 (lacD1), found in Streptococcus pyogenes serotype M3 (strain SSI-1).